We begin with the raw amino-acid sequence, 360 residues long: Phosphoserine aminotransferase (360 aa).

Arg-42 contacts L-glutamate. Pyridoxal 5'-phosphate-binding residues include Trp-102, Thr-152, Asp-171, and Gln-194. Lys-195 is subject to N6-(pyridoxal phosphate)lysine. 237-238 (NT) contacts pyridoxal 5'-phosphate.

Belongs to the class-V pyridoxal-phosphate-dependent aminotransferase family. SerC subfamily. In terms of assembly, homodimer. The cofactor is pyridoxal 5'-phosphate.

It is found in the cytoplasm. The enzyme catalyses O-phospho-L-serine + 2-oxoglutarate = 3-phosphooxypyruvate + L-glutamate. It carries out the reaction 4-(phosphooxy)-L-threonine + 2-oxoglutarate = (R)-3-hydroxy-2-oxo-4-phosphooxybutanoate + L-glutamate. The protein operates within amino-acid biosynthesis; L-serine biosynthesis; L-serine from 3-phospho-D-glycerate: step 2/3. Its pathway is cofactor biosynthesis; pyridoxine 5'-phosphate biosynthesis; pyridoxine 5'-phosphate from D-erythrose 4-phosphate: step 3/5. Its function is as follows. Catalyzes the reversible conversion of 3-phosphohydroxypyruvate to phosphoserine and of 3-hydroxy-2-oxo-4-phosphonooxybutanoate to phosphohydroxythreonine. This chain is Phosphoserine aminotransferase, found in Coxiella burnetii (strain RSA 331 / Henzerling II).